Here is a 472-residue protein sequence, read N- to C-terminus: Sarcalumenin (472 aa).

The first 20 residues, 1 to 20 (MKRLNLLCCCVASLLLLGTA), serve as a signal peptide directing secretion. L59 carries N-linked (GlcNAc...) asparagine glycosylation. In terms of domain architecture, Dynamin-type G spans 89 to 330 (ITSKPMVLFL…IENRMENKIA (242 aa)). Residues 99 to 106 (GPWSVGKS) are G1 motif. Residues 127–128 (EP) form a G2 motif region. Positions 189 to 192 (DTPG) are G3 motif. Positions 254–257 (NKAD) are G4 motif. A region of interest (G5 motif) is located at residue L278. N280 and N388 each carry an N-linked (GlcNAc...) asparagine glycan.

The protein belongs to the TRAFAC class dynamin-like GTPase superfamily. Dynamin/Fzo/YdjA family. N-glycosylated.

It localises to the sarcoplasmic reticulum lumen. It is found in the sarcoplasmic reticulum membrane. The sequence is that of Sarcalumenin (SRL) from Gallus gallus (Chicken).